A 1172-amino-acid chain; its full sequence is DNA-directed RNA polymerases IV and V subunit 2 (1172 aa).

Aspartate 786 lines the Mg(2+) pocket. Zn(2+)-binding residues include cysteine 1108, cysteine 1111, cysteine 1133, and cysteine 1136. The segment at 1108 to 1136 (CRKCKTYANVIERTPSSGRKIRGPYCRVC) adopts a C4-type zinc-finger fold.

Belongs to the RNA polymerase beta chain family. In terms of assembly, component of the RNA polymerase IV and V complexes. Interacts with SSH1, NRPD1 and NRPE1. In terms of tissue distribution, mostly expressed in seedlings, flowers and roots, present ubiquitously, except in sperm cells.

The protein localises to the nucleus. It carries out the reaction RNA(n) + a ribonucleoside 5'-triphosphate = RNA(n+1) + diphosphate. DNA-dependent RNA polymerase catalyzes the transcription of DNA into RNA using the four ribonucleoside triphosphates as substrates. Second largest component of RNA polymerases IV and V which mediate short-interfering RNAs (siRNA) accumulation and subsequent RNA-directed DNA methylation-dependent (RdDM) transcriptional gene silencing (TGS) of endogenous repeated sequences, including transposable elements. Proposed to contribute to the polymerase catalytic activity and forms the polymerase active center together with the largest subunit. Also required for full erasure of methylation when the RNA trigger is withdrawn. Required for intercellular RNA interference (RNAi) leading to systemic post-transcriptional gene silencing. Involved in the maintenance of post-transcriptional RNA silencing. During interphase, mediates siRNA-independent heterochromatin association and methylation into chromocenters and condensation and cytosine methylation at pericentromeric major repeats. Required for complete maintenance of the 35S promoter homology-dependent TGS in transgenic plants and for the initial establishment of DNA methylation. This Arabidopsis thaliana (Mouse-ear cress) protein is DNA-directed RNA polymerases IV and V subunit 2 (NRPD2).